The primary structure comprises 46 residues: Large ribosomal subunit protein bL36 (46 aa).

The protein belongs to the bacterial ribosomal protein bL36 family.

This Serratia proteamaculans (strain 568) protein is Large ribosomal subunit protein bL36.